The chain runs to 252 residues: Small ribosomal subunit protein uS3 (252 aa).

One can recognise a KH type-2 domain in the interval 39-109 (IRNYVQTRLK…EVKIDVVEVV (71 aa)). The span at 221–241 (EMKRIKERRSDSGPRSRNDRS) shows a compositional bias: basic and acidic residues. A disordered region spans residues 221 to 252 (EMKRIKERRSDSGPRSRNDRSQKRRRRPNDRG). Over residues 242 to 252 (QKRRRRPNDRG) the composition is skewed to basic residues.

Belongs to the universal ribosomal protein uS3 family. In terms of assembly, part of the 30S ribosomal subunit. Forms a tight complex with proteins S10 and S14.

Functionally, binds the lower part of the 30S subunit head. Binds mRNA in the 70S ribosome, positioning it for translation. This Chlorobium luteolum (strain DSM 273 / BCRC 81028 / 2530) (Pelodictyon luteolum) protein is Small ribosomal subunit protein uS3.